The chain runs to 445 residues: Membrane protein insertase YidC (445 aa).

A run of 5 helical transmembrane segments spans residues 6–26 (VVAI…PIKV), 248–268 (FGWA…PLYH), 313–333 (ASGC…WSVI), 352–372 (LSAG…VASY), and 388–408 (GIIM…GLFL).

It belongs to the OXA1/ALB3/YidC family. Type 1 subfamily. Interacts with the Sec translocase complex via SecD. Specifically interacts with transmembrane segments of nascent integral membrane proteins during membrane integration.

The protein resides in the cell inner membrane. Required for the insertion and/or proper folding and/or complex formation of integral membrane proteins into the membrane. Involved in integration of membrane proteins that insert both dependently and independently of the Sec translocase complex, as well as at least some lipoproteins. Aids folding of multispanning membrane proteins. The polypeptide is Membrane protein insertase YidC (Thermotoga maritima (strain ATCC 43589 / DSM 3109 / JCM 10099 / NBRC 100826 / MSB8)).